Consider the following 165-residue polypeptide: SsrA-binding protein (165 aa).

The tract at residues Lys141–Tyr165 is disordered. Residues Lys145–Lys159 show a composition bias toward basic and acidic residues.

Belongs to the SmpB family.

It is found in the cytoplasm. Required for rescue of stalled ribosomes mediated by trans-translation. Binds to transfer-messenger RNA (tmRNA), required for stable association of tmRNA with ribosomes. tmRNA and SmpB together mimic tRNA shape, replacing the anticodon stem-loop with SmpB. tmRNA is encoded by the ssrA gene; the 2 termini fold to resemble tRNA(Ala) and it encodes a 'tag peptide', a short internal open reading frame. During trans-translation Ala-aminoacylated tmRNA acts like a tRNA, entering the A-site of stalled ribosomes, displacing the stalled mRNA. The ribosome then switches to translate the ORF on the tmRNA; the nascent peptide is terminated with the 'tag peptide' encoded by the tmRNA and targeted for degradation. The ribosome is freed to recommence translation, which seems to be the essential function of trans-translation. This is SsrA-binding protein from Prochlorococcus marinus (strain MIT 9303).